Here is an 865-residue protein sequence, read N- to C-terminus: Leucine--tRNA ligase (865 aa).

Positions 58 to 68 match the 'HIGH' region motif; sequence PYPSGNLHMGH. Residues 629-633 carry the 'KMSKS' region motif; sequence KMSKS. Lys632 lines the ATP pocket.

The protein belongs to the class-I aminoacyl-tRNA synthetase family.

The protein localises to the cytoplasm. The enzyme catalyses tRNA(Leu) + L-leucine + ATP = L-leucyl-tRNA(Leu) + AMP + diphosphate. This is Leucine--tRNA ligase from Synechococcus sp. (strain ATCC 27144 / PCC 6301 / SAUG 1402/1) (Anacystis nidulans).